Reading from the N-terminus, the 503-residue chain is Variant surface glycoprotein ILTAT 1.3 (503 aa).

Positions 1–29 (MTKAYENRMLLQALVLAAVLCTTHAEGTA) are cleaved as a signal peptide. 2 disulfide bridges follow: cysteine 42/cysteine 168 and cysteine 150/cysteine 206. Residues asparagine 419 and asparagine 432 are each glycosylated (N-linked (GlcNAc...) asparagine). A lipid anchor (GPI-anchor amidated aspartate) is attached at aspartate 480. Positions 481–503 (SSFILNKQFALSVVSAAFAALLF) are cleaved as a propeptide — removed in mature form.

It is found in the cell membrane. Its function is as follows. VSG forms a coat on the surface of the parasite. The trypanosome evades the immune response of the host by expressing a series of antigenically distinct VSGs from an estimated 1000 VSG genes. In Trypanosoma brucei brucei, this protein is Variant surface glycoprotein ILTAT 1.3.